The following is a 118-amino-acid chain: Basic phospholipase A2 PA-9C (118 aa).

Cystine bridges form between Cys11–Cys71, Cys27–Cys117, Cys29–Cys45, Cys44–Cys98, Cys51–Cys91, Cys60–Cys84, and Cys78–Cys89. 3 residues coordinate Ca(2+): Tyr28, Gly30, and Gly32. The active site involves His48. Asp49 contacts Ca(2+). Residue Asp92 is part of the active site.

The protein belongs to the phospholipase A2 family. Group I subfamily. D49 sub-subfamily. Requires Ca(2+) as cofactor. In terms of tissue distribution, expressed by the venom gland.

Its subcellular location is the secreted. The catalysed reaction is a 1,2-diacyl-sn-glycero-3-phosphocholine + H2O = a 1-acyl-sn-glycero-3-phosphocholine + a fatty acid + H(+). Functionally, PLA2 catalyzes the calcium-dependent hydrolysis of the 2-acyl groups in 3-sn-phosphoglycerides. This is Basic phospholipase A2 PA-9C from Pseudechis australis (Mulga snake).